The chain runs to 544 residues: Chaperonin GroEL (544 aa).

ATP contacts are provided by residues 30-33 (TLGP), Lys51, 87-91 (DGTTT), Gly415, and Asp495.

It belongs to the chaperonin (HSP60) family. Forms a cylinder of 14 subunits composed of two heptameric rings stacked back-to-back. Interacts with the co-chaperonin GroES.

The protein resides in the cytoplasm. The catalysed reaction is ATP + H2O + a folded polypeptide = ADP + phosphate + an unfolded polypeptide.. In terms of biological role, together with its co-chaperonin GroES, plays an essential role in assisting protein folding. The GroEL-GroES system forms a nano-cage that allows encapsulation of the non-native substrate proteins and provides a physical environment optimized to promote and accelerate protein folding. The polypeptide is Chaperonin GroEL (Aeromonas salmonicida).